The sequence spans 1082 residues: Probable arabinosyltransferase B (1082 aa).

13 consecutive transmembrane segments (helical) span residues 28-50 (WVAT…LPVT), 223-241 (LAAM…LALW), 262-281 (VTAV…VIGA), 333-352 (SIWI…LLLS), 359-381 (LGPA…LGAW), 420-442 (AITT…AALL), 462-481 (WPLI…VVFA), 522-544 (AISR…FMML), 557-574 (AWRL…LMFT), 578-600 (WTHH…TVLV), 613-635 (AFLS…WWYV), 650-672 (GGVQ…AFWL), and 689-711 (APIP…IGVV).

This sequence belongs to the emb family.

Its subcellular location is the cell membrane. Functionally, arabinosyl transferase responsible for the polymerization of arabinose into the arabinan of arabinogalactan. This is Probable arabinosyltransferase B (embB) from Mycolicibacterium smegmatis (Mycobacterium smegmatis).